The chain runs to 417 residues: UDP-N-acetylglucosamine 1-carboxyvinyltransferase (417 aa).

Residue 22 to 23 participates in phosphoenolpyruvate binding; that stretch reads KN. UDP-N-acetyl-alpha-D-glucosamine is bound at residue arginine 93. Catalysis depends on cysteine 117, which acts as the Proton donor. Position 117 is a 2-(S-cysteinyl)pyruvic acid O-phosphothioketal (cysteine 117). UDP-N-acetyl-alpha-D-glucosamine-binding positions include 122-126, aspartate 304, and isoleucine 326; that span reads RPVDQ.

It belongs to the EPSP synthase family. MurA subfamily.

It is found in the cytoplasm. It carries out the reaction phosphoenolpyruvate + UDP-N-acetyl-alpha-D-glucosamine = UDP-N-acetyl-3-O-(1-carboxyvinyl)-alpha-D-glucosamine + phosphate. The protein operates within cell wall biogenesis; peptidoglycan biosynthesis. Functionally, cell wall formation. Adds enolpyruvyl to UDP-N-acetylglucosamine. This Laribacter hongkongensis (strain HLHK9) protein is UDP-N-acetylglucosamine 1-carboxyvinyltransferase.